Here is a 785-residue protein sequence, read N- to C-terminus: Conidiophore development regulator abaA (785 aa).

A disordered region spans residues 1–22; it reads MAEWQTECMLPPTQPGFEGVGP. A DNA-binding region (TEA) is located at residues 130–204; it reads GKDGEPVWSD…QVLDSFLKGD (75 aa). The tract at residues 213–232 is disordered; it reads EQPADRSNGQPPSAGPRWRN.

The protein belongs to the TEC1 family.

It is found in the nucleus. Its function is as follows. BrlA, abaA and wetA are pivotal regulators of conidiophore development and conidium maturation. They act individually and together to regulate their own expression and that of numerous other sporulation-specific genes. Binds to the sequence 5'-CATTCY-3', where Y is a pyrimidine, making both major- and minor-groove contacts. Controls expression of wetA. The sequence is that of Conidiophore development regulator abaA from Aspergillus oryzae (strain ATCC 42149 / RIB 40) (Yellow koji mold).